Reading from the N-terminus, the 262-residue chain is Small ribosomal subunit protein eS4 (262 aa).

Positions 42–105 constitute an S4 RNA-binding domain; sequence LPLVVFLRNR…NEHFRLVYDV (64 aa). Residues 178 to 211 enclose the KOW domain; it reads GRLVMVTGGRNLGRVGVIVHREKHEGGFDLVHIK.

It belongs to the eukaryotic ribosomal protein eS4 family. In terms of assembly, component of the small ribosomal subunit. Mature ribosomes consist of a small (40S) and a large (60S) subunit. The 40S subunit contains about 32 different proteins and 1 molecule of RNA (18S). The 60S subunit contains 45 different proteins and 3 molecules of RNA (25S, 5.8S and 5S).

The protein localises to the cytoplasm. In terms of biological role, component of the ribosome, a large ribonucleoprotein complex responsible for the synthesis of proteins in the cell. The small ribosomal subunit (SSU) binds messenger RNAs (mRNAs) and translates the encoded message by selecting cognate aminoacyl-transfer RNA (tRNA) molecules. The large subunit (LSU) contains the ribosomal catalytic site termed the peptidyl transferase center (PTC), which catalyzes the formation of peptide bonds, thereby polymerizing the amino acids delivered by tRNAs into a polypeptide chain. The nascent polypeptides leave the ribosome through a tunnel in the LSU and interact with protein factors that function in enzymatic processing, targeting, and the membrane insertion of nascent chains at the exit of the ribosomal tunnel. This is Small ribosomal subunit protein eS4 (RPS42) from Candida albicans (strain SC5314 / ATCC MYA-2876) (Yeast).